The primary structure comprises 312 residues: MTKIIFMGTPEFSVPVLTQLASTYDVVAVVTQPDRPVGRKRVLTPPPVKKAALELAIPVYQPEKLRTSSELEELIALEADLLVTAAYGQILPNSLLESPKHGAINVHASLLPEYRGGAPVHYALLDGKTETGVTIMYMVEKLDAGDMISQRKIPITDEDNTGTMFDKLSKLGAELLMDTLPDFLAGKITAIPQDPEKVTFARNISREQEKIDWTKPGRTIFNQIRGLSPWPVAYTTLEEKPFKIWEATYEETKEDGEPGAILADKTTLKIVAGDGTLIVPTVIQPAGKPKMDVHSFMTGAGRNLSKTTRFGE.

(6S)-5,6,7,8-tetrahydrofolate is bound at residue 109 to 112 (SLLP).

The protein belongs to the Fmt family.

It carries out the reaction L-methionyl-tRNA(fMet) + (6R)-10-formyltetrahydrofolate = N-formyl-L-methionyl-tRNA(fMet) + (6S)-5,6,7,8-tetrahydrofolate + H(+). Functionally, attaches a formyl group to the free amino group of methionyl-tRNA(fMet). The formyl group appears to play a dual role in the initiator identity of N-formylmethionyl-tRNA by promoting its recognition by IF2 and preventing the misappropriation of this tRNA by the elongation apparatus. The polypeptide is Methionyl-tRNA formyltransferase (Listeria monocytogenes serotype 4b (strain CLIP80459)).